A 263-amino-acid chain; its full sequence is L-erythrulose-1-phosphate isomerase (263 aa).

H106 functions as the Electrophile in the catalytic mechanism. The active-site Proton acceptor is the E178.

The protein belongs to the triosephosphate isomerase family.

It carries out the reaction L-erythrulose 1-phosphate = D-erythrulose 4-phosphate. Its pathway is carbohydrate metabolism; L-threitol degradation. Catalyzes the isomerization of L-erythrulose-1P to D-erythrulose-4P. Involved in the degradation pathway of L-threitol, that allows M.smegmatis to grow on this compound as the sole carbon source. The polypeptide is L-erythrulose-1-phosphate isomerase (Mycolicibacterium smegmatis (strain ATCC 700084 / mc(2)155) (Mycobacterium smegmatis)).